The sequence spans 502 residues: ATP-dependent DNA helicase uvsW (502 aa).

The region spanning Val-122–Phe-280 is the Helicase ATP-binding domain. Position 135–142 (Leu-135–Ser-142) interacts with ATP. Positions Asp-232–His-235 match the DEAH box motif. In terms of domain architecture, Helicase C-terminal spans Trp-335 to Asn-501.

Probably interacts with UvsW.1. Interacts with gp32. It depends on Mg(2+) as a cofactor.

The enzyme catalyses Couples ATP hydrolysis with the unwinding of duplex DNA by translocating in the 3'-5' direction.. It carries out the reaction ATP + H2O = ADP + phosphate + H(+). With respect to regulation, unwinding activity is strongly stimulated by single-stranded binding protein gp32, the ssDNA annealing activity is partially inhibited by gp32 and strongly inhibited by ATP-gamma-S. Another study did not find gp32 stimulation of helicase activity. Holliday junction (HJ) branch migration is inhibited by ATP-gamma-S. In terms of biological role, plays important roles in recombination-dependent DNA repair and the reorganization of stalled replication forks during viral DNA synthesis. Active on in vivo-derived T4 DNA; viral DNA is highly modified by hydroxymethylation and glucosylation of cytosine residues. Helps process Holliday junction (HJ) intermediates to mature products by catalyzing branch migration. Probably able to catalyze replication fork regression. Unwinds HJ and Y-branched but not linear double-stranded (ds)DNA; unwinding requires ATP and Mg(2+). Unwinds dsDNA with a 3'-single-stranded (ss)DNA overhang, suggesting it is a 3'-5' helicase. Another study does not find this activity. Unwinds D- and R-loops. Also anneals ssDNA; ATP stimulates annealing. Has ssDNA and dsDNA-stimulated ATPase activity, also hydrolyzes GTP in the presence of DNA. The protein is ATP-dependent DNA helicase uvsW of Enterobacteria phage T4 (Bacteriophage T4).